The following is a 419-amino-acid chain: UDP-N-acetylglucosamine 1-carboxyvinyltransferase (419 aa).

22 to 23 (KN) serves as a coordination point for phosphoenolpyruvate. Arg93 is a UDP-N-acetyl-alpha-D-glucosamine binding site. Cys117 serves as the catalytic Proton donor. Cys117 carries the post-translational modification 2-(S-cysteinyl)pyruvic acid O-phosphothioketal. UDP-N-acetyl-alpha-D-glucosamine is bound by residues Asp307 and Ile329.

This sequence belongs to the EPSP synthase family. MurA subfamily.

The protein localises to the cytoplasm. The enzyme catalyses phosphoenolpyruvate + UDP-N-acetyl-alpha-D-glucosamine = UDP-N-acetyl-3-O-(1-carboxyvinyl)-alpha-D-glucosamine + phosphate. The protein operates within cell wall biogenesis; peptidoglycan biosynthesis. In terms of biological role, cell wall formation. Adds enolpyruvyl to UDP-N-acetylglucosamine. The protein is UDP-N-acetylglucosamine 1-carboxyvinyltransferase of Shewanella sp. (strain MR-7).